We begin with the raw amino-acid sequence, 518 residues long: Filamentous growth regulator 15 (518 aa).

Residues 1-41 (MESTLSVSDEKLTNSSTALNNCGDNKESSQVLTTANTTTDN) show a composition bias toward polar residues. 3 disordered regions span residues 1–63 (MEST…SKER), 75–101 (VDPN…DHGK), and 261–307 (KSRS…KQHR). Positions 42-52 (QQVQPKSQHQQ) are enriched in low complexity. A compositionally biased stretch (polar residues) spans 77–95 (PNQQSKNTVSDSVQDTTGV). Residues 262–274 (SRSRSKVTKKRKV) show a composition bias toward basic residues. The span at 283–298 (SNTATATTSVTTPDAN) shows a compositional bias: low complexity. The C2H2-type zinc finger occupies 374–406 (HECQLPSAEEPHKLCLRRFSRKYELIRHQETVH). A disordered region spans residues 492–518 (RKSSGDDTNYMETSDLESGEEEVTFNK). Residues 505–518 (SDLESGEEEVTFNK) are compositionally biased toward acidic residues.

It is found in the nucleus. In terms of biological role, probable transcription factor involved in the regulation of filamentous growth. In Candida albicans (strain SC5314 / ATCC MYA-2876) (Yeast), this protein is Filamentous growth regulator 15 (FGR15).